The chain runs to 361 residues: Probable cytosolic iron-sulfur protein assembly protein 1 (361 aa).

7 WD repeats span residues 10 to 49, 56 to 105, 120 to 160, 167 to 206, 213 to 265, 280 to 319, and 327 to 361; these read AHSD…NFPQ, THKR…TEIL, GHEN…EEFE, DHQH…DDWS, GHEG…SIKH, VHQY…SWSI, and HGVH…IWKP.

It belongs to the WD repeat CIA1 family. In terms of assembly, interacts with NAR1.

It is found in the cytoplasm. It localises to the nucleus. In terms of biological role, essential component of the cytosolic iron-sulfur (Fe/S) protein assembly machinery. Required for the maturation of extramitochondrial Fe/S proteins. The sequence is that of Probable cytosolic iron-sulfur protein assembly protein 1 from Scheffersomyces stipitis (strain ATCC 58785 / CBS 6054 / NBRC 10063 / NRRL Y-11545) (Yeast).